Reading from the N-terminus, the 94-residue chain is Pyrimidine/purine nucleoside phosphorylase (94 aa).

It belongs to the nucleoside phosphorylase PpnP family.

The catalysed reaction is a purine D-ribonucleoside + phosphate = a purine nucleobase + alpha-D-ribose 1-phosphate. It catalyses the reaction adenosine + phosphate = alpha-D-ribose 1-phosphate + adenine. It carries out the reaction cytidine + phosphate = cytosine + alpha-D-ribose 1-phosphate. The enzyme catalyses guanosine + phosphate = alpha-D-ribose 1-phosphate + guanine. The catalysed reaction is inosine + phosphate = alpha-D-ribose 1-phosphate + hypoxanthine. It catalyses the reaction thymidine + phosphate = 2-deoxy-alpha-D-ribose 1-phosphate + thymine. It carries out the reaction uridine + phosphate = alpha-D-ribose 1-phosphate + uracil. The enzyme catalyses xanthosine + phosphate = alpha-D-ribose 1-phosphate + xanthine. Functionally, catalyzes the phosphorolysis of diverse nucleosides, yielding D-ribose 1-phosphate and the respective free bases. Can use uridine, adenosine, guanosine, cytidine, thymidine, inosine and xanthosine as substrates. Also catalyzes the reverse reactions. This Pectobacterium carotovorum subsp. carotovorum (strain PC1) protein is Pyrimidine/purine nucleoside phosphorylase.